The following is a 156-amino-acid chain: Ribosome maturation factor RimP (156 aa).

The protein belongs to the RimP family.

The protein resides in the cytoplasm. Its function is as follows. Required for maturation of 30S ribosomal subunits. The polypeptide is Ribosome maturation factor RimP (Bacillus thuringiensis (strain Al Hakam)).